The sequence spans 911 residues: DNA ligase 4 (911 aa).

ATP is bound by residues glutamate 271, threonine 272, lysine 273, leucine 274, arginine 278, glutamate 331, lysine 345, phenylalanine 367, glutamate 427, lysine 432, lysine 449, and lysine 451. Lysine 273 functions as the N6-AMP-lysine intermediate in the catalytic mechanism. Glutamate 331 contributes to the Mg(2+) binding site. Position 427 (glutamate 427) interacts with Mg(2+). Residues 610–620 form a required for catalytic activity region; it reads LATKHLHVGDD. 2 consecutive BRCT domains span residues 654 to 743 and 808 to 911; these read KVSN…PRFM and SPLS…QYLL.

Belongs to the ATP-dependent DNA ligase family. In terms of assembly, interacts with XRCC4; the LIG4-XRCC4 subcomplex has a 1:2 stoichiometry and XRCC4 is required for LIG4 stability. Component of the core long-range non-homologous end joining (NHEJ) complex (also named DNA-PK complex) composed of PRKDC, LIG4, XRCC4, XRCC6/Ku70, XRCC5/Ku86 and NHEJ1/XLF. Additional component of the NHEJ complex includes PAXX. Following autophosphorylation, PRKDC dissociates from DNA, leading to formation of the short-range NHEJ complex, composed of LIG4, XRCC4, XRCC6/Ku70, XRCC5/Ku86 and NHEJ1/XLF. Interacts with DCLRE1C; the interaction is direct. Interacts with APLF. The cofactor is Mg(2+).

Its subcellular location is the nucleus. It catalyses the reaction ATP + (deoxyribonucleotide)n-3'-hydroxyl + 5'-phospho-(deoxyribonucleotide)m = (deoxyribonucleotide)n+m + AMP + diphosphate.. DNA ligase involved in DNA non-homologous end joining (NHEJ); required for double-strand break (DSB) repair and V(D)J recombination. Catalyzes the NHEJ ligation step of the broken DNA during DSB repair by resealing the DNA breaks after the gap filling is completed. Joins single-strand breaks in a double-stranded polydeoxynucleotide in an ATP-dependent reaction. LIG4 is mechanistically flexible: it can ligate nicks as well as compatible DNA overhangs alone, while in the presence of XRCC4, it can ligate ends with 2-nucleotides (nt) microhomology and 1-nt gaps. Forms a subcomplex with XRCC4; the LIG4-XRCC4 subcomplex is responsible for the NHEJ ligation step and XRCC4 enhances the joining activity of LIG4. Binding of the LIG4-XRCC4 complex to DNA ends is dependent on the assembly of the DNA-dependent protein kinase complex DNA-PK to these DNA ends. LIG4 regulates nuclear localization of XRCC4. The protein is DNA ligase 4 of Mus musculus (Mouse).